Here is a 365-residue protein sequence, read N- to C-terminus: Phosphatidylcholine:ceramide cholinephosphotransferase 4 (365 aa).

Over 1–44 (MISYPFFSLSPPGLVPPPMAVPPVEMYSGSFWNRMRKPLPLRTQ) the chain is Cytoplasmic. A helical transmembrane segment spans residues 45-65 (VIRFTVVFVIVSFILAVALQI). The Lumenal portion of the chain corresponds to 66-92 (THERMPDPKVTKPLPDLGFELLTKVPG). A helical membrane pass occupies residues 93 to 113 (MYVLADCCIGFLNILSVFTAF). The Cytoplasmic segment spans residues 114-165 (KLYLLHRHCVGSGEPELPCNIPGVSRFFLSVWLCKENCRIELRNIHTIAWIR). Residues 166-186 (FITSYALLLLFRSAVIVMTSL) traverse the membrane as a helical segment. Over 187 to 229 (PAPDDLCQDPPKIENPVKNVILTVLTAGGGSIHCGDLMYSGHT) the chain is Lumenal. His228 is an active-site residue. A helical transmembrane segment spans residues 230-250 (VILTLHLMFHWIYGAMVHWSF). Position 251 (Arg251) is a topological domain, cytoplasmic. The chain crosses the membrane as a helical span at residues 252-272 (PVVTVVAIFGYYCIVASRFHY). Active-site residues include His271 and Asp275. Topologically, residues 273-275 (TDD) are lumenal. A helical membrane pass occupies residues 276 to 296 (VLVAIYLTIATFIAVGHNADG). Over 297–365 (APWQLQLFIR…SLMFKCGAYV (69 aa)) the chain is Cytoplasmic.

Belongs to the sphingomyelin synthase family.

It localises to the golgi apparatus membrane. The catalysed reaction is an N-acylsphing-4-enine + a 1,2-diacyl-sn-glycero-3-phosphocholine = a sphingomyelin + a 1,2-diacyl-sn-glycerol. It catalyses the reaction an N-acylsphinganine + a 1,2-diacyl-sn-glycero-3-phosphocholine = an N-acylsphinganine-1-phosphocholine + a 1,2-diacyl-sn-glycerol. The enzyme catalyses an N-acylsphing-4-enine + a 1,2-diacyl-sn-glycero-3-phosphoethanolamine = an N-acylsphing-4-enine 1-phosphoethanolamine + a 1,2-diacyl-sn-glycerol. It carries out the reaction an N-acylsphinganine + a 1,2-diacyl-sn-glycero-3-phosphoethanolamine = an N-acylsphinganine-1-phosphoethanolamine + a 1,2-diacyl-sn-glycerol. The catalysed reaction is a 1,2-diacyl-sn-glycero-3-phospho-(1D-myo-inositol) + an N-acylsphing-4-enine = an N-acylsphing-4-enine-(1D-myo-inositol) + a 1,2-diacyl-sn-glycerol. It catalyses the reaction an N-acylsphinganine + a 1,2-diacyl-sn-glycero-3-phospho-(1D-myo-inositol) = an N-acylsphinganine-(1D-myo-inositol) + a 1,2-diacyl-sn-glycerol. Its function is as follows. Bifunctional sphingomyelin (SM)/ethanolamine phosphorylceramide (EPC) synthase with minimal inositol phosphorylceramide (IPC) synthase activity. Specificity is likely to be defined by residues in the lumenal catalytic domain that interact with the polar head groups of the phospholipid donors. SM is synthesized by both stages of the parasite life cycle, bloodstream forms (BSF) and procyclic forms (PCF), by transferring the phosphoryl headgroup from a 1,2-diacyl-sn-glycero-3-phosphocholine to an N-acylsphing-4-enine (ceramide) or an N-acylsphinganine (dihydroceramide) with release of 1,2-diacyl-sn-glycerol. Also catalyzes the reverse reaction, production of ceramide from sphingomyelin. EPC is synthesized by transferring phosphoethanolamine from a 1,2-diacyl-sn-glycero-3-phosphoethanolamine to ceramide or dihydroceramide by BSF and PCF, while IPC is confined to PCF. The ceramide/dihydroceramide ratios are skewed towards dihydroceramide in PCF parasites and ceramide in BSF parasites, this is likely due to differential expression and/or regulation of dihydroceramide desaturase, the enzyme responsible for converting dihydroceramide to ceramide. The protein is Phosphatidylcholine:ceramide cholinephosphotransferase 4 of Trypanosoma brucei brucei.